The sequence spans 158 residues: Transcription elongation factor GreA (158 aa).

Residues 4 to 75 (EKTYPMTQEG…TQLENMIRNA (72 aa)) adopt a coiled-coil conformation.

This sequence belongs to the GreA/GreB family.

Its function is as follows. Necessary for efficient RNA polymerase transcription elongation past template-encoded arresting sites. The arresting sites in DNA have the property of trapping a certain fraction of elongating RNA polymerases that pass through, resulting in locked ternary complexes. Cleavage of the nascent transcript by cleavage factors such as GreA or GreB allows the resumption of elongation from the new 3'terminus. GreA releases sequences of 2 to 3 nucleotides. The sequence is that of Transcription elongation factor GreA from Bacillus anthracis (strain A0248).